We begin with the raw amino-acid sequence, 146 residues long: Ribonuclease H (146 aa).

Positions 1-143 constitute an RNase H type-1 domain; the sequence is MEKTITIYTD…CDELARLAIK (143 aa). The Mg(2+) site is built by D10, E48, D70, and D135.

The protein belongs to the RNase H family. As to quaternary structure, monomer. Requires Mg(2+) as cofactor.

It is found in the cytoplasm. The catalysed reaction is Endonucleolytic cleavage to 5'-phosphomonoester.. Endonuclease that specifically degrades the RNA of RNA-DNA hybrids. The sequence is that of Ribonuclease H from Chlorobaculum parvum (strain DSM 263 / NCIMB 8327) (Chlorobium vibrioforme subsp. thiosulfatophilum).